The sequence spans 544 residues: MAKDVRLGLDAREKMVEGINVLADAVKVTLGPKGRNVVLEKSFGAPTVTKDGVSVAREIELEDKFMNMGAQMVKEVSSQTNDVAGDGTTTATVLAQSIVREGMKSVAAGMNPMDLNRGIHKAVEAVVKEIQKMSVPCTTTESIAQVGTISANSDSAVGKMIAEAMEKVSTEGVITVEEGSSLHDELVVVEGMEFDRGYLSPYFVTNQEKMVAELDNPYILLHDKKISNIRDLLPTLEAVSKAGRPLLIIAEDVDGEALATLVINNMRGIVKATAIKAPGFGERRKAMLQDMAVLTGGTVISEEVGLTLENVTLDMLGETKSAVVGKDSTKLIDGAGAKADIEARCAQIRSQAENTTSEYDSEKLQERLAKLAGGVAVIKLGAATEVEMKEKKDRVDDALHATRAAVQEGIVAGGGVALVRARSKVKVKGDNDEQQLGIEIALRAMEEPMRQIAANCGLEGSVIVNKVMESKDNMGFDAASETYVDMIKAGIIDPAKVTRSALQNAASVAGLVLTTGAAIADLPSKDGASADAAAGGMGGMGGMM.

ATP is bound by residues 29-32, Lys-50, 86-90, Gly-414, 477-479, and Asp-493; these read TLGP, DGTTT, and DAA.

This sequence belongs to the chaperonin (HSP60) family. In terms of assembly, forms a cylinder of 14 subunits composed of two heptameric rings stacked back-to-back. Interacts with the co-chaperonin GroES.

Its subcellular location is the cytoplasm. It catalyses the reaction ATP + H2O + a folded polypeptide = ADP + phosphate + an unfolded polypeptide.. In terms of biological role, together with its co-chaperonin GroES, plays an essential role in assisting protein folding. The GroEL-GroES system forms a nano-cage that allows encapsulation of the non-native substrate proteins and provides a physical environment optimized to promote and accelerate protein folding. In Hydrogenovibrio crunogenus (strain DSM 25203 / XCL-2) (Thiomicrospira crunogena), this protein is Chaperonin GroEL.